The following is a 288-amino-acid chain: Probable anion import ATP-binding protein HVO_1886 (288 aa).

Residues 1-18 (MTTERPDAGDSGSEKPDE) show a composition bias toward basic and acidic residues. Residues 1-33 (MTTERPDAGDSGSEKPDETAAPDPAANGARRSK) form a disordered region. In terms of domain architecture, ABC transporter spans 36–282 (LAARSLGHGF…PDDDRVRQFV (247 aa)). 68–75 (GPSGTGKT) is an ATP binding site.

It belongs to the ABC transporter superfamily. In terms of assembly, the complex is composed of two ATP-binding proteins (HVO_1886), two transmembrane proteins (HVO_1887) and a solute-binding protein (HVO_1888).

The protein localises to the cell membrane. Functionally, part of an ABC transporter complex involved in anions import. Responsible for energy coupling to the transport system. The protein is Probable anion import ATP-binding protein HVO_1886 of Haloferax volcanii (strain ATCC 29605 / DSM 3757 / JCM 8879 / NBRC 14742 / NCIMB 2012 / VKM B-1768 / DS2) (Halobacterium volcanii).